The chain runs to 345 residues: MKALEWMGDSLKILDQTRLPVEIKYRMAATYEEVAEAIEKMEVRGAPAIGAAAAYGYALGAIGYSGELAGLSAHMEKVQHRLAETRPTAVNLFWALRRMEDRLRDQHEAKELAEIRQALVAEAESIAEDDRRVNRLIGEHGNAIVTAEANILTHCNAGALATVEYGTALGVIRAAQQAGKKVHVYAGETRPFLQGARLTALELMNDHIPVTLIADNMAGFLMQQGNIDLVIVGADRIAANGDTANKIGTYSLAVLAHAHGIPFYVAAPTSTIDLKVPSGQDIPIEERNPKELREVFGVQVAPPEVPVYNPAFDVTPAKLITGIITEKGIVTSPYSVNLLKMMVRS.

Residues R44–A46, R86, and Q194 each bind substrate. The active-site Proton donor is the D235. A substrate-binding site is contributed by N245–K246.

It belongs to the eIF-2B alpha/beta/delta subunits family. MtnA subfamily.

It carries out the reaction 5-(methylsulfanyl)-alpha-D-ribose 1-phosphate = 5-(methylsulfanyl)-D-ribulose 1-phosphate. Its pathway is amino-acid biosynthesis; L-methionine biosynthesis via salvage pathway; L-methionine from S-methyl-5-thio-alpha-D-ribose 1-phosphate: step 1/6. In terms of biological role, catalyzes the interconversion of methylthioribose-1-phosphate (MTR-1-P) into methylthioribulose-1-phosphate (MTRu-1-P). This chain is Methylthioribose-1-phosphate isomerase, found in Desulfitobacterium hafniense (strain Y51).